Consider the following 257-residue polypeptide: Zinc import ATP-binding protein ZnuC (257 aa).

An ABC transporter domain is found at 6-221 (IRLDQVGVTF…PAFVELFGKT (216 aa)). 38–45 (GPNGAGKT) lines the ATP pocket.

It belongs to the ABC transporter superfamily. Zinc importer (TC 3.A.1.15.5) family. The complex is composed of two ATP-binding proteins (ZnuC), two transmembrane proteins (ZnuB) and a solute-binding protein (ZnuA).

The protein localises to the cell inner membrane. The catalysed reaction is Zn(2+)(out) + ATP(in) + H2O(in) = Zn(2+)(in) + ADP(in) + phosphate(in) + H(+)(in). Functionally, part of the ABC transporter complex ZnuABC involved in zinc import. Responsible for energy coupling to the transport system. This chain is Zinc import ATP-binding protein ZnuC, found in Pseudomonas putida (strain ATCC 47054 / DSM 6125 / CFBP 8728 / NCIMB 11950 / KT2440).